The primary structure comprises 320 residues: Malate dehydrogenase (320 aa).

NAD(+)-binding positions include 10-15 (GAGMIG) and aspartate 34. Residues arginine 83 and arginine 89 each contribute to the substrate site. NAD(+)-binding positions include asparagine 96 and 119–121 (ITN). The substrate site is built by asparagine 121 and arginine 152. Histidine 176 functions as the Proton acceptor in the catalytic mechanism.

This sequence belongs to the LDH/MDH superfamily. MDH type 3 family.

It catalyses the reaction (S)-malate + NAD(+) = oxaloacetate + NADH + H(+). Functionally, catalyzes the reversible oxidation of malate to oxaloacetate. In Caulobacter vibrioides (strain NA1000 / CB15N) (Caulobacter crescentus), this protein is Malate dehydrogenase.